Consider the following 210-residue polypeptide: Putative Dihydrofolate reductase (210 aa).

The DHFR domain occupies 4–184 (TLYCVVAVDT…IFYMFETYIK (181 aa)).

This sequence belongs to the dihydrofolate reductase family.

It catalyses the reaction (6S)-5,6,7,8-tetrahydrofolate + NADP(+) = 7,8-dihydrofolate + NADPH + H(+). This chain is Putative Dihydrofolate reductase (ORF2), found in Human herpesvirus 8 type P (isolate GK18) (HHV-8).